The sequence spans 128 residues: Probable 4-amino-4-deoxy-L-arabinose-phosphoundecaprenol flippase subunit ArnF (128 aa).

Topologically, residues 1–2 (MG) are cytoplasmic. A helical transmembrane segment spans residues 3–23 (LMWGLFSVIIASVAQLSLGFA). At 24–35 (ASHLPPMTHLWD) the chain is on the periplasmic side. Residues 36–56 (FIATLLAFGLDARILLLGLLG) traverse the membrane as a helical segment. Over 57–77 (YLLSVFCWYKTLHKLALSKAY) the chain is Cytoplasmic. Residues 78-98 (ALLSMSYVLVWIASMVLPGWG) form a helical membrane-spanning segment. The Periplasmic portion of the chain corresponds to 99-100 (GT). A helical membrane pass occupies residues 101–121 (FSLKALLGVACIMSGLMLIFL). Residues 122–128 (PTTKQRY) are Cytoplasmic-facing.

The protein belongs to the ArnF family. In terms of assembly, heterodimer of ArnE and ArnF.

Its subcellular location is the cell inner membrane. It participates in bacterial outer membrane biogenesis; lipopolysaccharide biosynthesis. Translocates 4-amino-4-deoxy-L-arabinose-phosphoundecaprenol (alpha-L-Ara4N-phosphoundecaprenol) from the cytoplasmic to the periplasmic side of the inner membrane. This Shigella dysenteriae serotype 1 (strain Sd197) protein is Probable 4-amino-4-deoxy-L-arabinose-phosphoundecaprenol flippase subunit ArnF.